Consider the following 341-residue polypeptide: MTDAPTLTTDVAIIGAGPAGLFAAFECGMLKLDSLLIDALDCVGGQCAALYPEKPIYDIPGHPAIAGAALIEGLEQQIAPFDVPRLLGRRVERLSGHRGAFTLGTDRGETIHARAVIIAAGAGAFGPNRPPLAGLDGFEATGAVQYYVRRRADFAGTRIVIAGGGDSAIDWALALKDEAEKIWLVHRRDRFRAAPESLRQLDEAVAAGRIEKIVPYQLHGLRGTDGALEGVEVATLDGDTRILPADRLLPFFGLSTDLGPIAHWGMDSIRSTIPVVPSSCETTLPGVFAVGDVAAYPGKLKLILQGFSEGAMAAHAIHPIVRPDTALHFEYSTSKGVPDRI.

7 residues coordinate FAD: D38, Q46, Y51, V91, F125, D292, and T333.

Belongs to the ferredoxin--NADP reductase type 2 family. As to quaternary structure, homodimer. Requires FAD as cofactor.

It carries out the reaction 2 reduced [2Fe-2S]-[ferredoxin] + NADP(+) + H(+) = 2 oxidized [2Fe-2S]-[ferredoxin] + NADPH. This Gluconacetobacter diazotrophicus (strain ATCC 49037 / DSM 5601 / CCUG 37298 / CIP 103539 / LMG 7603 / PAl5) protein is Ferredoxin--NADP reductase.